A 410-amino-acid polypeptide reads, in one-letter code: Lipid droplet-regulating VLDL assembly factor AUP1 (410 aa).

N-acetylmethionine is present on Met-1. Topologically, residues 1–20 (MEPPPAPGPERLFDSHRLPS) are cytoplasmic. The stretch at 21 to 41 (DGFLLLALLLYAPVGLCLLVL) is an intramembrane region. Over 42 to 410 (RLFLGLHVFL…FRERQAQEAE (369 aa)) the chain is Cytoplasmic. The segment at 259–293 (LTPADKAEHMKRQRHPRLRPQSVQSSFPSPPSPSS) is disordered. The residue at position 292 (Ser-292) is a Phosphoserine. The CUE domain occupies 296–338 (QLTILAQRVKEVLPHVPLNVIQRDLARTGCVDLTITNLLEGAV). The segment at 348–367 (GSQSLPTASAPKFPSSGLVT) is disordered. Ser-363 is modified (phosphoserine). The residue at position 367 (Thr-367) is a Phosphothreonine.

The protein belongs to the AUP1 family. In terms of assembly, identified in a complex that contains SEL1L, OS9, FAF2/UBXD8, UBE2J1/UBC6E and AUP1. Interacts with the cytoplasmic tail of ITGA2B, ITGA1, ITGA2, ITGA5, ITGAV and ITGAM. Interacts (via C-terminus) with UBE2G2; the interaction recruits UBE2G2 to lipid droplets. Interacts with ubiquitin ligases AMFR/gp78 and RNF139/TRC8; this promotes interaction of UBE2G2 with AMFR and RNF139. Interacts with apolipoprotein APOB. In terms of processing, monoubiquitinated and diubiquitinated.

The protein localises to the endoplasmic reticulum membrane. It is found in the lipid droplet. In terms of biological role, plays a role in the translocation of terminally misfolded proteins from the endoplasmic reticulum lumen to the cytoplasm and their degradation by the proteasome. Plays a role in lipid droplet formation. Induces lipid droplet clustering. Recruits ubiquitin-conjugating enzyme UBE2G2 to lipid droplets which facilitates its interaction with ubiquitin ligases AMFR/gp78 and RNF139/TRC8, leading to sterol-induced ubiquitination of HMGCR and its subsequent proteasomal degradation. Also required for the degradation of INSIG1, SREBF1 and SREBF2. Plays a role in regulating assembly and secretion of very low density lipoprotein particles and stability of apolipoprotein APOB. In Rattus norvegicus (Rat), this protein is Lipid droplet-regulating VLDL assembly factor AUP1.